The following is a 178-amino-acid chain: RNA-binding protein (178 aa).

The interval 113 to 178 (PKIGSKNKKT…KGKGKRGGKR (66 aa)) is disordered. Residues 168–178 (SKGKGKRGGKR) are compositionally biased toward basic residues.

The protein belongs to the phytoreovirus RNA-binding protein family.

It localises to the host cytoplasm. Its function is as follows. Constituent of viral factories. Binds to ssRNA and dsRNA. The polypeptide is RNA-binding protein (Wound tumor virus (WTV)).